The following is a 324-amino-acid chain: uncharacterized protein (324 aa).

This is an uncharacterized protein from Borreliella burgdorferi (strain ATCC 35210 / DSM 4680 / CIP 102532 / B31) (Borrelia burgdorferi).